A 483-amino-acid polypeptide reads, in one-letter code: Protein nucleotidyltransferase YdiU (483 aa).

8 residues coordinate ATP: Gly-100, Gly-102, Arg-103, Lys-123, Asp-135, Gly-136, Arg-189, and Arg-196. Catalysis depends on Asp-265, which acts as the Proton acceptor. Mg(2+) is bound by residues Asn-266 and Asp-275. Asp-275 serves as a coordination point for ATP.

Belongs to the SELO family. Mg(2+) is required as a cofactor. It depends on Mn(2+) as a cofactor.

The catalysed reaction is L-seryl-[protein] + ATP = 3-O-(5'-adenylyl)-L-seryl-[protein] + diphosphate. It carries out the reaction L-threonyl-[protein] + ATP = 3-O-(5'-adenylyl)-L-threonyl-[protein] + diphosphate. It catalyses the reaction L-tyrosyl-[protein] + ATP = O-(5'-adenylyl)-L-tyrosyl-[protein] + diphosphate. The enzyme catalyses L-histidyl-[protein] + UTP = N(tele)-(5'-uridylyl)-L-histidyl-[protein] + diphosphate. The catalysed reaction is L-seryl-[protein] + UTP = O-(5'-uridylyl)-L-seryl-[protein] + diphosphate. It carries out the reaction L-tyrosyl-[protein] + UTP = O-(5'-uridylyl)-L-tyrosyl-[protein] + diphosphate. Its function is as follows. Nucleotidyltransferase involved in the post-translational modification of proteins. It can catalyze the addition of adenosine monophosphate (AMP) or uridine monophosphate (UMP) to a protein, resulting in modifications known as AMPylation and UMPylation. The sequence is that of Protein nucleotidyltransferase YdiU from Gloeobacter violaceus (strain ATCC 29082 / PCC 7421).